Reading from the N-terminus, the 61-residue chain is Large ribosomal subunit protein bL32 (61 aa).

This sequence belongs to the bacterial ribosomal protein bL32 family.

The chain is Large ribosomal subunit protein bL32 from Cytophaga hutchinsonii (strain ATCC 33406 / DSM 1761 / CIP 103989 / NBRC 15051 / NCIMB 9469 / D465).